The primary structure comprises 233 residues: Putative N-acetylmuramoyl-L-alanine amidase (233 aa).

Residues 1–219 form the MurNAc-LAA domain; it reads MIDPGHGGQD…IANAIYIALK (219 aa).

It belongs to the N-acetylmuramoyl-L-alanine amidase 3 family.

It localises to the secreted. The catalysed reaction is Hydrolyzes the link between N-acetylmuramoyl residues and L-amino acid residues in certain cell-wall glycopeptides.. Functionally, cell-wall hydrolase involved in septum cleavage during cell division. The chain is Putative N-acetylmuramoyl-L-alanine amidase (amiB) from Buchnera aphidicola subsp. Schizaphis graminum (strain Sg).